A 439-amino-acid chain; its full sequence is Probable anion transporter 7 (439 aa).

The first 28 residues, 1–28 (MTALTRMKFPKRYVIVLLTFICTNVCYI), serve as a signal peptide directing secretion. 11 helical membrane passes run 53-73 (MILS…GWAA), 81-101 (VLLL…LDPK), 104-124 (VILV…FPAI), 143-163 (LTTS…PSLV), 167-187 (GAQS…VIWL), 232-252 (IIFS…HYAL), 280-300 (LPYF…DHLI), 312-332 (KLLN…LPLF), 338-358 (TVLC…GFAV), 367-387 (FAGI…IVGV), and 412-432 (TVFF…LIFS).

It belongs to the major facilitator superfamily. Sodium/anion cotransporter (TC 2.A.1.14) family.

It is found in the cell membrane. Probable anion transporter. The protein is Probable anion transporter 7 (PHT4;7) of Oryza sativa subsp. japonica (Rice).